We begin with the raw amino-acid sequence, 585 residues long: uncharacterized protein (585 aa).

The segment at 27-59 (DDSERSVKSVSVSISDDEDSKTDVQDNMATPST) is disordered.

This is an uncharacterized protein from Saccharomyces cerevisiae (strain ATCC 204508 / S288c) (Baker's yeast).